The sequence spans 253 residues: Lys-63-specific deubiquitinase BRCC36 (253 aa).

The region spanning 9–145 (VELQTDVYMV…KEHEIFLNCF (137 aa)) is the MPN domain. 3 residues coordinate Zn(2+): histidine 94, histidine 96, and aspartate 107. The JAMM motif signature appears at 94–107 (HSHPHITVCPSHVD). The stretch at 227 to 249 (EKRIALNKLRATHLQRQLQELQK) forms a coiled coil.

It belongs to the peptidase M67A family. BRCC36 subfamily. In terms of assembly, component of the BRISC complex, at least composed of ABRAXAS2, BRCC3/BRCC36, BABAM2 and BABAM1/NBA1. Within the complex, interacts directly with ABRAXAS2. The heterodimer with ABRAXAS2 assembles into a heterotetramer. The BRISC complex binds polyubiquitin. The cofactor is Zn(2+).

Its subcellular location is the cytoplasm. It is found in the nucleus. The protein localises to the cytoskeleton. The protein resides in the spindle pole. Functionally, metalloprotease that specifically cleaves 'Lys-63'-linked polyubiquitin chains, leaving the last ubiquitin chain attached to its substrates. Catalytic subunit of the BRISC complex; does not have activity by itself, but needs to be associated into a heterotetramer with ABRAXAS2 for minimal in vitro activity. Plays a role in regulating the onset of apoptosis via its role in modulating 'Lys-63'-linked ubiquitination of target proteins. Required for normal mitotic spindle assembly and microtubule attachment to kinetochores via its role in deubiquitinating spindle assembly factors. This Camponotus floridanus (Florida carpenter ant) protein is Lys-63-specific deubiquitinase BRCC36.